The chain runs to 215 residues: Elongation factor Ts (215 aa).

The tract at residues 80–83 is involved in Mg(2+) ion dislocation from EF-Tu; the sequence is TDFA.

The protein belongs to the EF-Ts family.

It localises to the cytoplasm. Associates with the EF-Tu.GDP complex and induces the exchange of GDP to GTP. It remains bound to the aminoacyl-tRNA.EF-Tu.GTP complex up to the GTP hydrolysis stage on the ribosome. The chain is Elongation factor Ts from Acetivibrio thermocellus (strain ATCC 27405 / DSM 1237 / JCM 9322 / NBRC 103400 / NCIMB 10682 / NRRL B-4536 / VPI 7372) (Clostridium thermocellum).